We begin with the raw amino-acid sequence, 421 residues long: ATP-dependent RNA helicase RhlB (421 aa).

The Q motif motif lies at 9 to 37 (QKFSDFALHPKVVEVLEKKGFHNCTPIQA). One can recognise a Helicase ATP-binding domain in the interval 40-219 (LPLTLAGRDV…FEQMNNAEYI (180 aa)). Position 53-60 (53-60 (AQTGTGKT)) interacts with ATP. A DEAD box motif is present at residues 165 to 168 (DEAD). The Helicase C-terminal domain occupies 245–390 (RLLQTLIEEE…VSKYNPDALM (146 aa)). Residues 392 to 421 (DLPKPLRLTRPRTGNGPRRTGAPRNRRRSG) are disordered. Over residues 402–414 (PRTGNGPRRTGAP) the composition is skewed to low complexity.

The protein belongs to the DEAD box helicase family. RhlB subfamily. In terms of assembly, component of the RNA degradosome, which is a multiprotein complex involved in RNA processing and mRNA degradation.

It localises to the cytoplasm. It catalyses the reaction ATP + H2O = ADP + phosphate + H(+). In terms of biological role, DEAD-box RNA helicase involved in RNA degradation. Has RNA-dependent ATPase activity and unwinds double-stranded RNA. The chain is ATP-dependent RNA helicase RhlB from Shigella boydii serotype 18 (strain CDC 3083-94 / BS512).